The following is a 135-amino-acid chain: MLMPKRVKYRKNHLPHIKGKETRGLKLAFGDYGIQAVGRGYVDSRMIESCRVIMAKNIGKTGKYWIRIFPDVAWTKKPLEVRMGGGKGDPEKWIFPVKPGRIMFELTGVDEDTAKHIARLIGFRLPFEVRLISRV.

It belongs to the universal ribosomal protein uL16 family. As to quaternary structure, part of the 50S ribosomal subunit.

In terms of biological role, binds 23S rRNA and is also seen to make contacts with the A and possibly P site tRNAs. The chain is Large ribosomal subunit protein uL16 from Coprothermobacter proteolyticus (strain ATCC 35245 / DSM 5265 / OCM 4 / BT).